Here is a 330-residue protein sequence, read N- to C-terminus: Intraflagellar transport protein 46 homolog (330 aa).

Disordered stretches follow at residues 1-21 (MDRPYDETVDIPDSEDIATPR) and 55-112 (SIKT…EGVY). Residues 7–16 (ETVDIPDSED) show a composition bias toward acidic residues. A compositionally biased stretch (basic and acidic residues) spans 68-79 (SSSEKLCDRGSS). Residues 80 to 101 (DDDDDDDNDDDEDEDDDDDDEN) are compositionally biased toward acidic residues.

The protein belongs to the IFT46 family.

It localises to the cytoplasm. The protein resides in the cytoskeleton. It is found in the cilium basal body. The protein localises to the cell projection. Its subcellular location is the cilium. Forms part of a complex involved in intraflagellar transport (IFT), the bi-directional movement of particles required for the assembly, maintenance and functioning of primary cilia. This is Intraflagellar transport protein 46 homolog from Schistosoma japonicum (Blood fluke).